A 476-amino-acid chain; its full sequence is Serine--tRNA ligase (476 aa).

279 to 281 contacts L-serine; the sequence is TAE. An ATP-binding site is contributed by 310 to 312; that stretch reads RAE. Glu333 provides a ligand contact to L-serine. ATP is bound at residue 400 to 403; sequence EISS. Ser435 is an L-serine binding site.

This sequence belongs to the class-II aminoacyl-tRNA synthetase family. Type-1 seryl-tRNA synthetase subfamily. As to quaternary structure, homodimer. The tRNA molecule binds across the dimer.

It is found in the cytoplasm. It catalyses the reaction tRNA(Ser) + L-serine + ATP = L-seryl-tRNA(Ser) + AMP + diphosphate + H(+). The enzyme catalyses tRNA(Sec) + L-serine + ATP = L-seryl-tRNA(Sec) + AMP + diphosphate + H(+). It participates in aminoacyl-tRNA biosynthesis; selenocysteinyl-tRNA(Sec) biosynthesis; L-seryl-tRNA(Sec) from L-serine and tRNA(Sec): step 1/1. In terms of biological role, catalyzes the attachment of serine to tRNA(Ser). Is also able to aminoacylate tRNA(Sec) with serine, to form the misacylated tRNA L-seryl-tRNA(Sec), which will be further converted into selenocysteinyl-tRNA(Sec). This Rhodopseudomonas palustris (strain BisA53) protein is Serine--tRNA ligase.